A 502-amino-acid chain; its full sequence is Chromatin structure-remodeling complex protein RSC58 (502 aa).

One can recognise a Bromo domain in the interval 19 to 134; that stretch reads SILNAASVKC…KFSSELLLRE (116 aa). The segment at 336–378 is disordered; it reads NEEGINRKQNDENNKNVDGKSNGVQDDGGDNDNDATIASANSE. Residues 339–353 are compositionally biased toward basic and acidic residues; the sequence is GINRKQNDENNKNVD.

Component of the two forms of the RSC complex composed of at least either RSC1 or RSC2, and ARP7, ARP9, LDB7, NPL6, RSC3, RSC30, RSC4, RSC58, RSC6, RSC8, RSC9, SFH1, STH1, HTL1 and probably RTT102. The complexes interact with histone and histone variant components of centromeric chromatin.

Its subcellular location is the nucleus. In terms of biological role, component of the chromatin structure-remodeling complex (RSC), which is involved in transcription regulation and nucleosome positioning. RSC is responsible for the transfer of a histone octamer from a nucleosome core particle to naked DNA. The reaction requires ATP and involves an activated RSC-nucleosome intermediate. Remodeling reaction also involves DNA translocation, DNA twist and conformational change. As a reconfigurer of centromeric and flanking nucleosomes, RSC complex is required both for proper kinetochore function in chromosome segregation and, via a PKC1-dependent signaling pathway, for organization of the cellular cytoskeleton. This is Chromatin structure-remodeling complex protein RSC58 (RSC58) from Saccharomyces cerevisiae (strain ATCC 204508 / S288c) (Baker's yeast).